Here is a 284-residue protein sequence, read N- to C-terminus: 4-diphosphocytidyl-2-C-methyl-D-erythritol kinase (284 aa).

Lysine 14 is a catalytic residue. 97-107 (PMGGGVGGGSS) is a binding site for ATP. Aspartate 139 is an active-site residue.

Belongs to the GHMP kinase family. IspE subfamily.

It carries out the reaction 4-CDP-2-C-methyl-D-erythritol + ATP = 4-CDP-2-C-methyl-D-erythritol 2-phosphate + ADP + H(+). Its pathway is isoprenoid biosynthesis; isopentenyl diphosphate biosynthesis via DXP pathway; isopentenyl diphosphate from 1-deoxy-D-xylulose 5-phosphate: step 3/6. Functionally, catalyzes the phosphorylation of the position 2 hydroxy group of 4-diphosphocytidyl-2C-methyl-D-erythritol. The protein is 4-diphosphocytidyl-2-C-methyl-D-erythritol kinase of Pseudoalteromonas translucida (strain TAC 125).